We begin with the raw amino-acid sequence, 95 residues long: Aspartyl/glutamyl-tRNA(Asn/Gln) amidotransferase subunit C (95 aa).

Belongs to the GatC family. As to quaternary structure, heterotrimer of A, B and C subunits.

The catalysed reaction is L-glutamyl-tRNA(Gln) + L-glutamine + ATP + H2O = L-glutaminyl-tRNA(Gln) + L-glutamate + ADP + phosphate + H(+). It catalyses the reaction L-aspartyl-tRNA(Asn) + L-glutamine + ATP + H2O = L-asparaginyl-tRNA(Asn) + L-glutamate + ADP + phosphate + 2 H(+). Its function is as follows. Allows the formation of correctly charged Asn-tRNA(Asn) or Gln-tRNA(Gln) through the transamidation of misacylated Asp-tRNA(Asn) or Glu-tRNA(Gln) in organisms which lack either or both of asparaginyl-tRNA or glutaminyl-tRNA synthetases. The reaction takes place in the presence of glutamine and ATP through an activated phospho-Asp-tRNA(Asn) or phospho-Glu-tRNA(Gln). The chain is Aspartyl/glutamyl-tRNA(Asn/Gln) amidotransferase subunit C from Pelagibacter ubique (strain HTCC1062).